The following is a 503-amino-acid chain: UDP-N-acetylmuramoylalanine--D-glutamate ligase (503 aa).

129-135 (GTNGKTT) is an ATP binding site. A disordered region spans residues 284–305 (DSEAEGEGKPRRRKADATAQEA).

This sequence belongs to the MurCDEF family.

It is found in the cytoplasm. It carries out the reaction UDP-N-acetyl-alpha-D-muramoyl-L-alanine + D-glutamate + ATP = UDP-N-acetyl-alpha-D-muramoyl-L-alanyl-D-glutamate + ADP + phosphate + H(+). Its pathway is cell wall biogenesis; peptidoglycan biosynthesis. Functionally, cell wall formation. Catalyzes the addition of glutamate to the nucleotide precursor UDP-N-acetylmuramoyl-L-alanine (UMA). This chain is UDP-N-acetylmuramoylalanine--D-glutamate ligase, found in Cupriavidus pinatubonensis (strain JMP 134 / LMG 1197) (Cupriavidus necator (strain JMP 134)).